The sequence spans 249 residues: Adenylate kinase (249 aa).

An ATP-binding site is contributed by 43 to 48; that stretch reads GAGKGT. The NMP stretch occupies residues 63–92; sequence ATGDMLRAQVAAKSALGVEAKKIMDQGGLV. Residues Thr64, Arg69, 90–92, 119–122, and Gln126 each bind AMP; these read GLV and GFPR. An LID region spans residues 160-197; the sequence is GRLVHPASGRSYHKLFNPPKKDMIDDVSGDALVQRSDD. ATP contacts are provided by residues Arg161 and 170–171; that span reads SY. The AMP site is built by Arg194 and Arg205. An ATP-binding site is contributed by Gln233.

It belongs to the adenylate kinase family. AK2 subfamily. In terms of assembly, monomer.

It is found in the cytoplasm. Its subcellular location is the cytosol. The protein localises to the mitochondrion intermembrane space. It carries out the reaction AMP + ATP = 2 ADP. Functionally, catalyzes the reversible transfer of the terminal phosphate group between ATP and AMP. Plays an important role in cellular energy homeostasis and in adenine nucleotide metabolism. Adenylate kinase activity is critical for regulation of the phosphate utilization and the AMP de novo biosynthesis pathways. The protein is Adenylate kinase of Debaryomyces hansenii (strain ATCC 36239 / CBS 767 / BCRC 21394 / JCM 1990 / NBRC 0083 / IGC 2968) (Yeast).